Consider the following 404-residue polypeptide: Voltage-gated potassium channel subunit beta-3 (404 aa).

Over residues 1-14 the composition is skewed to polar residues; the sequence is MQVSIACTEQNLRS. The disordered stretch occupies residues 1–77; it reads MQVSIACTEQ…LRESTGRGTG (77 aa). The segment covering 28 to 50 has biased composition (gly residues); that stretch reads PGGGNGGPAGGGHGNPPGGGGSG. Residues Thr-97, Trp-98, Gln-104, and Asp-126 each contribute to the NADP(+) site. Catalysis depends on Tyr-131, which acts as the Proton donor/acceptor. Residues Asn-199, Ser-229, Arg-230, Gln-255, Trp-284, Pro-286, Leu-287, Ala-288, Cys-289, Lys-295, Arg-305, Gly-364, Ser-366, Gln-370, and Glu-373 each contribute to the NADP(+) site.

The protein belongs to the shaker potassium channel beta subunit family. Forms heteromultimeric complex with alpha subunits. Interacts with KCNA5 and KCNB2. Brain specific. Most prominent expression in cerebellum. Weaker signals detected in cortex, occipital lobe, frontal lobe and temporal lobe. Not detected in spinal cord, heart, lung, liver, kidney, pancreas, placenta and skeletal muscle.

The protein localises to the cytoplasm. Its function is as follows. Regulatory subunit of the voltage-gated potassium (Kv) channels composed of pore-forming and potassium-conducting alpha subunits and of regulatory beta subunit. The beta-3/KCNAB3 subunit may mediate closure of potassium channels. Increases inactivation of Kv1.5/KCNA5 alpha subunit-containing channels. May display nicotinamide adenine dinucleotide phosphate (NADPH)-dependent aldoketoreductase activity. The binding of oxidized and reduced NADP(H) cofactors may be required for the regulation of potassium channel activity. This chain is Voltage-gated potassium channel subunit beta-3, found in Homo sapiens (Human).